A 185-amino-acid chain; its full sequence is Threonylcarbamoyl-AMP synthase (185 aa).

In terms of domain architecture, YrdC-like spans 4–185 (SWRVQQAARE…LATGEIVRPG (182 aa)).

This sequence belongs to the SUA5 family. TsaC subfamily.

It is found in the cytoplasm. It catalyses the reaction L-threonine + hydrogencarbonate + ATP = L-threonylcarbamoyladenylate + diphosphate + H2O. In terms of biological role, required for the formation of a threonylcarbamoyl group on adenosine at position 37 (t(6)A37) in tRNAs that read codons beginning with adenine. Catalyzes the conversion of L-threonine, HCO(3)(-)/CO(2) and ATP to give threonylcarbamoyl-AMP (TC-AMP) as the acyladenylate intermediate, with the release of diphosphate. This Pseudomonas putida (strain W619) protein is Threonylcarbamoyl-AMP synthase.